The chain runs to 734 residues: Photosystem I P700 chlorophyll a apoprotein A2 (734 aa).

A run of 8 helical transmembrane segments spans residues 46-69, 135-158, 175-199, 273-291, 330-353, 369-395, 417-439, and 517-535; these read IFAS…FHVA, LYTG…LHLQ, LNHH…HVAI, IAHH…GHMY, LHFQ…QHMY, AALY…ILVI, AIIS…LYVH, and FLVH…LILV. The [4Fe-4S] cluster site is built by Cys559 and Cys568. The next 2 membrane-spanning stretches (helical) occupy residues 575-596 and 643-665; these read AFYL…YWHW and LSVW…MFLI. Residues His654, Met662, and Tyr670 each coordinate chlorophyll a. Residue Trp671 participates in phylloquinone binding. Residues 707-727 form a helical membrane-spanning segment; it reads LVGLAHFSVGYIFTYAAFLIA.

The protein belongs to the PsaA/PsaB family. As to quaternary structure, the PsaA/B heterodimer binds the P700 chlorophyll special pair and subsequent electron acceptors. PSI consists of a core antenna complex that captures photons, and an electron transfer chain that converts photonic excitation into a charge separation. The eukaryotic PSI reaction center is composed of at least 11 subunits. It depends on P700 is a chlorophyll a/chlorophyll a' dimer, A0 is one or more chlorophyll a, A1 is one or both phylloquinones and FX is a shared 4Fe-4S iron-sulfur center. as a cofactor.

Its subcellular location is the plastid. It localises to the chloroplast thylakoid membrane. It catalyses the reaction reduced [plastocyanin] + hnu + oxidized [2Fe-2S]-[ferredoxin] = oxidized [plastocyanin] + reduced [2Fe-2S]-[ferredoxin]. PsaA and PsaB bind P700, the primary electron donor of photosystem I (PSI), as well as the electron acceptors A0, A1 and FX. PSI is a plastocyanin-ferredoxin oxidoreductase, converting photonic excitation into a charge separation, which transfers an electron from the donor P700 chlorophyll pair to the spectroscopically characterized acceptors A0, A1, FX, FA and FB in turn. Oxidized P700 is reduced on the lumenal side of the thylakoid membrane by plastocyanin. The sequence is that of Photosystem I P700 chlorophyll a apoprotein A2 from Atropa belladonna (Belladonna).